The sequence spans 84 residues: Venom protein SynTx (84 aa).

Residues 1 to 19 form the signal peptide; that stretch reads TLLLTLVVVTIVCLDLGYT. Intrachain disulfides connect C22–C43, C36–C61, C65–C76, and C77–C82.

The protein belongs to the three-finger toxin family. Short-chain subfamily. Aminergic toxin sub-subfamily. As to quaternary structure, homodimer; disulfide-linked. In terms of tissue distribution, expressed by the venom gland.

It is found in the secreted. Its function is as follows. This protein shows a synergetic toxic effect in that it enhances the toxicity of other toxins. This Dendroaspis jamesoni jamesoni (Jameson's mamba) protein is Venom protein SynTx.